The following is a 766-amino-acid chain: MEEIQKLINELGGSQYKDKDTEHYSEEAVELLIKKIDNKSKGKTVIESNTLIYKTLADWSKVEDNRETIIRSPSNVIEKTFQLFEFLLPNGVETLNTDTTVEQSELFSMVCRLLGNLTYENAPNREFIFDKTPSILKYISSFVSQTKYQSLQRTSCAAIANLSSETDFIQLEFFKLGVVSILIDLICREGTTDEVNQMAIKAFNNLVDNENTQVDIHFKEIHRLLGQLKKSLNKEGYYENSFANDLVSSLSTLSLNKDLQKEILKEGFLNDLIELIEESNVHREMINQFEDDDIEKDKDISIAPSTSELIFKLADNDDYRQYFYNKERDGNDANNILDRMIKIMTSPPPAYKDGDSKAQLKALDVAKVKKNITKTIALCSLEDDVIDKFIKTPKIFVDLLVDTEDTERIVNGEMIIGNLARSEPNCRLLNSYNVIELIADIMKKFPNFQPIQHLGLSSIRNLTLPTINKGFKPSSTLMEDVVFNSKVHNQVIQFAALSLIKNFIGCDQSNLKLFLEFPNALQSLLDLANGRVPASMDDESDQQEQLQLDDAKIQEIEEKFEEKEKTIEKTDEKTDEKTNEKKQSKKDMRVIYEATRLLLRFLDNSELSNHQEKMKQLIEESVEPFFSLLQSPFPILQVEGAKGLVLLIKHDKQLFLSRPSWVKDLVEVLSLSIIPFQQLSREQSTITTDPNHQKLIAQIQSNCNFSTELQNVILSNIFYNFSLDESICKKMKDQNVISELKTLKSKQDAPQSLTNLIQKILVQLTI.

ARM repeat units lie at residues 82-119 (QLFEFLLPNGVETLNTDTTVEQSELFSMVCRLLGNLTY), 167-208 (DFIQ…NLVD), 423-464 (EPNC…NLTL), and 465-537 (PTIN…ASMD). The tract at residues 561-585 (EEKEKTIEKTDEKTDEKTNEKKQSK) is disordered. Residues 610–649 (HQEKMKQLIEESVEPFFSLLQSPFPILQVEGAKGLVLLIK) form an ARM 5 repeat.

The protein belongs to the RAP1GDS1 family. In terms of assembly, binds to small GTPases racE, racC but not rab21. Binds preferentially to GDP-bound racE.

In terms of biological role, part of a signaling pathway that initiates the aggregation and leads to the formation of aggregation centers or streams. Not essential for cytokinesis, pinocytosis or phagocytosis. Not essential for development, except in starvation-induced aggregation. This is Darlin (darA) from Dictyostelium discoideum (Social amoeba).